The sequence spans 1398 residues: DNA-directed RNA polymerase subunit beta' (1398 aa).

Zn(2+) contacts are provided by Cys-71, Cys-73, Cys-86, and Cys-89. Mg(2+)-binding residues include Asp-462, Asp-464, and Asp-466. Zn(2+) is bound by residues Cys-810, Cys-884, Cys-891, and Cys-894.

It belongs to the RNA polymerase beta' chain family. The RNAP catalytic core consists of 2 alpha, 1 beta, 1 beta' and 1 omega subunit. When a sigma factor is associated with the core the holoenzyme is formed, which can initiate transcription. Requires Mg(2+) as cofactor. The cofactor is Zn(2+).

It catalyses the reaction RNA(n) + a ribonucleoside 5'-triphosphate = RNA(n+1) + diphosphate. Functionally, DNA-dependent RNA polymerase catalyzes the transcription of DNA into RNA using the four ribonucleoside triphosphates as substrates. This chain is DNA-directed RNA polymerase subunit beta', found in Mesorhizobium japonicum (strain LMG 29417 / CECT 9101 / MAFF 303099) (Mesorhizobium loti (strain MAFF 303099)).